Here is a 73-residue protein sequence, read N- to C-terminus: Toxin Td9 (73 aa).

Positions 1–7 (IGMVAEC) are cleaved as a signal peptide. Positions 8–70 (KDGYLVGDDG…IWNSATNSCG (63 aa)) constitute an LCN-type CS-alpha/beta domain. Intrachain disulfides connect Cys-18–Cys-69, Cys-22–Cys-44, Cys-30–Cys-50, and Cys-34–Cys-52. A Lysine amide modification is found at Lys-71.

The protein belongs to the long (4 C-C) scorpion toxin superfamily. Sodium channel inhibitor family. Beta subfamily. Expressed by the venom gland.

It localises to the secreted. Its function is as follows. Beta toxins bind voltage-independently at site-4 of sodium channels (Nav) and shift the voltage of activation toward more negative potentials thereby affecting sodium channel activation and promoting spontaneous and repetitive firing. This is Toxin Td9 from Tityus discrepans (Venezuelan scorpion).